The chain runs to 122 residues: Large ribosomal subunit protein uL14 (122 aa).

The protein belongs to the universal ribosomal protein uL14 family. Part of the 50S ribosomal subunit. Forms a cluster with proteins L3 and L19. In the 70S ribosome, L14 and L19 interact and together make contacts with the 16S rRNA in bridges B5 and B8.

Its function is as follows. Binds to 23S rRNA. Forms part of two intersubunit bridges in the 70S ribosome. The sequence is that of Large ribosomal subunit protein uL14 from Thermus aquaticus.